The following is a 365-amino-acid chain: tRNA/tmRNA (uracil-C(5))-methyltransferase (365 aa).

Positions 189, 217, 222, 238, and 298 each coordinate S-adenosyl-L-methionine. Cys-323 serves as the catalytic Nucleophile. Glu-357 serves as the catalytic Proton acceptor.

It belongs to the class I-like SAM-binding methyltransferase superfamily. RNA M5U methyltransferase family. TrmA subfamily.

It catalyses the reaction uridine(54) in tRNA + S-adenosyl-L-methionine = 5-methyluridine(54) in tRNA + S-adenosyl-L-homocysteine + H(+). The catalysed reaction is uridine(341) in tmRNA + S-adenosyl-L-methionine = 5-methyluridine(341) in tmRNA + S-adenosyl-L-homocysteine + H(+). Its function is as follows. Dual-specificity methyltransferase that catalyzes the formation of 5-methyluridine at position 54 (m5U54) in all tRNAs, and that of position 341 (m5U341) in tmRNA (transfer-mRNA). This chain is tRNA/tmRNA (uracil-C(5))-methyltransferase, found in Pseudoalteromonas atlantica (strain T6c / ATCC BAA-1087).